We begin with the raw amino-acid sequence, 183 residues long: Dual-action ribosomal maturation protein DarP (183 aa).

Residues 1 to 27 form a disordered region; the sequence is MSSHSQEPVGEENFDDSEYDRPSKSQV. Residues 9-18 show a composition bias toward acidic residues; that stretch reads VGEENFDDSE.

This sequence belongs to the DarP family.

The protein resides in the cytoplasm. Functionally, member of a network of 50S ribosomal subunit biogenesis factors which assembles along the 30S-50S interface, preventing incorrect 23S rRNA structures from forming. Promotes peptidyl transferase center (PTC) maturation. This Bordetella parapertussis (strain 12822 / ATCC BAA-587 / NCTC 13253) protein is Dual-action ribosomal maturation protein DarP.